The chain runs to 471 residues: NADH-quinone oxidoreductase subunit N (471 aa).

14 consecutive transmembrane segments (helical) span residues Phe6–Tyr26, Ser30–Phe50, Leu70–Thr90, Ile98–Ile118, Leu123–Phe143, Phe158–Phe178, Leu198–Phe218, Pro230–Ile250, Trp264–Ile284, Leu292–Ser312, Ile320–Leu340, Leu365–Ala385, Phe400–Ile420, and Ile438–Pro458.

Belongs to the complex I subunit 2 family. In terms of assembly, NDH-1 is composed of 14 different subunits. Subunits NuoA, H, J, K, L, M, N constitute the membrane sector of the complex.

It localises to the cell inner membrane. The catalysed reaction is a quinone + NADH + 5 H(+)(in) = a quinol + NAD(+) + 4 H(+)(out). Functionally, NDH-1 shuttles electrons from NADH, via FMN and iron-sulfur (Fe-S) centers, to quinones in the respiratory chain. The immediate electron acceptor for the enzyme in this species is believed to be ubiquinone. Couples the redox reaction to proton translocation (for every two electrons transferred, four hydrogen ions are translocated across the cytoplasmic membrane), and thus conserves the redox energy in a proton gradient. In Pelagibacter ubique (strain HTCC1062), this protein is NADH-quinone oxidoreductase subunit N.